The primary structure comprises 364 residues: Dihydroorotate dehydrogenase (quinone) (364 aa).

FMN contacts are provided by residues 61 to 65 (AGFDK) and threonine 85. Lysine 65 lines the substrate pocket. A substrate-binding site is contributed by 110-114 (NRMGF). FMN-binding residues include asparagine 139 and asparagine 170. Residue asparagine 170 participates in substrate binding. Serine 173 serves as the catalytic Nucleophile. Residue asparagine 175 coordinates substrate. 2 residues coordinate FMN: lysine 214 and alanine 242. 243–244 (NT) serves as a coordination point for substrate. FMN-binding positions include glycine 266, glycine 295, and 316 to 317 (YS).

It belongs to the dihydroorotate dehydrogenase family. Type 2 subfamily. Monomer. FMN serves as cofactor.

The protein resides in the cell membrane. The catalysed reaction is (S)-dihydroorotate + a quinone = orotate + a quinol. The protein operates within pyrimidine metabolism; UMP biosynthesis via de novo pathway; orotate from (S)-dihydroorotate (quinone route): step 1/1. Catalyzes the conversion of dihydroorotate to orotate with quinone as electron acceptor. The protein is Dihydroorotate dehydrogenase (quinone) of Rhodopseudomonas palustris (strain TIE-1).